Here is a 471-residue protein sequence, read N- to C-terminus: MPN domain-containing protein (471 aa).

The span at methionine 1–alanine 10 shows a compositional bias: low complexity. The interval methionine 1 to cysteine 63 is disordered. Alanine 2 is subject to N-acetylalanine. Serine 8 is subject to Phosphoserine. The span at glutamate 16–aspartate 29 shows a compositional bias: acidic residues. Over residues glycine 36–cysteine 63 the composition is skewed to gly residues. Residues threonine 71–histidine 166 form the RAMA domain. Positions 123, 125, and 145 each coordinate DNA. A disordered region spans residues threonine 170–arginine 229. Phosphoserine occurs at positions 178 and 181. Over residues glutamate 182–valine 197 the composition is skewed to acidic residues. The 136-residue stretch at valine 272–valine 407 folds into the MPN domain. Residues histidine 349, histidine 351, and aspartate 362 each contribute to the Zn(2+) site. A JAMM motif motif is present at residues histidine 349–aspartate 362.

Belongs to the peptidase M67 family. In terms of assembly, monomer. Mainly monomoric, but when binds to dsDNA, forms homotetramer assembled into two homodimers. May interact with histones; this interaction is facilitated by dsDNA binding. In terms of processing, degraded following binding to N(6)-methyladenosine methylated DNA (m6A).

Its function is as follows. Probable protease. Acts as a sensor of N(6)-methyladenosine methylation on DNA (m6A): recognizes and binds m6A DNA, leading to its degradation. Binds only double strand DNA (dsDNA) in a sequence-independent manner. This is MPN domain-containing protein from Homo sapiens (Human).